The primary structure comprises 363 residues: Carbamoyl phosphate synthase small chain (363 aa).

A CPSase region spans residues 1 to 172 (MTKRILMLED…AFASPGDGKR (172 aa)). L-glutamine-binding residues include Ser46, Gly220, and Gly222. Positions 172 to 359 (RVVLVDYGVK…MEMMNGKEEG (188 aa)) constitute a Glutamine amidotransferase type-1 domain. Cys247 serves as the catalytic Nucleophile. Residues Leu248, Gln251, Asn289, Gly291, and Tyr292 each contribute to the L-glutamine site. Active-site residues include His332 and Glu334.

This sequence belongs to the CarA family. As to quaternary structure, composed of two chains; the small (or glutamine) chain promotes the hydrolysis of glutamine to ammonia, which is used by the large (or ammonia) chain to synthesize carbamoyl phosphate. Tetramer of heterodimers (alpha,beta)4.

It carries out the reaction hydrogencarbonate + L-glutamine + 2 ATP + H2O = carbamoyl phosphate + L-glutamate + 2 ADP + phosphate + 2 H(+). It catalyses the reaction L-glutamine + H2O = L-glutamate + NH4(+). The protein operates within amino-acid biosynthesis; L-arginine biosynthesis; carbamoyl phosphate from bicarbonate: step 1/1. It functions in the pathway pyrimidine metabolism; UMP biosynthesis via de novo pathway; (S)-dihydroorotate from bicarbonate: step 1/3. Its function is as follows. Small subunit of the glutamine-dependent carbamoyl phosphate synthetase (CPSase). CPSase catalyzes the formation of carbamoyl phosphate from the ammonia moiety of glutamine, carbonate, and phosphate donated by ATP, constituting the first step of 2 biosynthetic pathways, one leading to arginine and/or urea and the other to pyrimidine nucleotides. The small subunit (glutamine amidotransferase) binds and cleaves glutamine to supply the large subunit with the substrate ammonia. The sequence is that of Carbamoyl phosphate synthase small chain from Listeria monocytogenes serotype 4b (strain F2365).